A 501-amino-acid chain; its full sequence is Myosin heavy chain, embryonic smooth muscle isoform (501 aa).

Residues 1 to 457 adopt a coiled-coil conformation; it reads REAREKETKA…TLKNRLRRGG (457 aa). Positions 1 to 501 are rodlike tail (S2 and LMM domains); the sequence is REAREKETKA…VNETQPPQSE (501 aa). Disordered regions lie at residues 182-202, 221-254, and 397-501; these read YQRE…QSKE, LASS…ALLD, and MEKA…PQSE. Over residues 223-233 the composition is skewed to basic and acidic residues; the sequence is SSERARRHAEQ. Residues 492–501 show a composition bias toward polar residues; that stretch reads VNETQPPQSE.

In terms of assembly, muscle myosin is a hexameric protein that consists of 2 heavy chain subunits (MHC), 2 alkali light chain subunits (MLC) and 2 regulatory light chain subunits (MLC-2).

It localises to the cytoplasm. The protein resides in the myofibril. Functionally, muscle contraction. The protein is Myosin heavy chain, embryonic smooth muscle isoform of Oryctolagus cuniculus (Rabbit).